The primary structure comprises 382 residues: UDP-N-acetylglucosamine--N-acetylmuramyl-(pentapeptide) pyrophosphoryl-undecaprenol N-acetylglucosamine transferase (382 aa).

UDP-N-acetyl-alpha-D-glucosamine is bound by residues 11 to 13 (TGG), asparagine 117, arginine 160, serine 209, and glutamine 311.

This sequence belongs to the glycosyltransferase 28 family. MurG subfamily.

The protein localises to the cell inner membrane. It carries out the reaction di-trans,octa-cis-undecaprenyl diphospho-N-acetyl-alpha-D-muramoyl-L-alanyl-D-glutamyl-meso-2,6-diaminopimeloyl-D-alanyl-D-alanine + UDP-N-acetyl-alpha-D-glucosamine = di-trans,octa-cis-undecaprenyl diphospho-[N-acetyl-alpha-D-glucosaminyl-(1-&gt;4)]-N-acetyl-alpha-D-muramoyl-L-alanyl-D-glutamyl-meso-2,6-diaminopimeloyl-D-alanyl-D-alanine + UDP + H(+). It functions in the pathway cell wall biogenesis; peptidoglycan biosynthesis. Functionally, cell wall formation. Catalyzes the transfer of a GlcNAc subunit on undecaprenyl-pyrophosphoryl-MurNAc-pentapeptide (lipid intermediate I) to form undecaprenyl-pyrophosphoryl-MurNAc-(pentapeptide)GlcNAc (lipid intermediate II). The sequence is that of UDP-N-acetylglucosamine--N-acetylmuramyl-(pentapeptide) pyrophosphoryl-undecaprenol N-acetylglucosamine transferase from Rickettsia akari (strain Hartford).